We begin with the raw amino-acid sequence, 253 residues long: MELKKLMEHISIIPDYRQAWKVEHKLSDILLLTICAVISGAEGWEDIEDFGETHPDFLKQYGDFENGIPVHDTIARVVSCICPAKFHESFINWMLDYHSSDDKDVIAIDGKIHRHSYDKSRRKGAIHVISAFSTMHSLVIGQIKTDKKSNEITAIPELLNMLDIKGKIIKTDAMGCQKDIAEKIQKQGGDYLFAVKGNQGRLNKAFEEKFPLKELNNPKHDSYAISEKSHGREETRLHIVCDVPDELIDFTFE.

Belongs to the transposase 11 family.

The chain is H repeat-associated putative transposase YbfD (ybfD) from Escherichia coli (strain K12).